The sequence spans 112 residues: Ribosomal processing cysteine protease Prp (112 aa).

Catalysis depends on H22, which acts as the Proton donor. C34 acts as the Nucleophile in catalysis.

The protein belongs to the Prp family. As to quaternary structure, homodimer.

In terms of biological role, an essential cysteine protease that cleaves the N-terminus from ribosomal protein bL27. The polypeptide is Ribosomal processing cysteine protease Prp (Bacillus subtilis (strain 168)).